We begin with the raw amino-acid sequence, 340 residues long: tRNA N6-adenosine threonylcarbamoyltransferase (340 aa).

Fe cation is bound by residues histidine 113 and histidine 117. Substrate-binding positions include 135-139 (LVSGG), aspartate 169, glycine 182, aspartate 186, and asparagine 274. Residue aspartate 302 coordinates Fe cation.

The protein belongs to the KAE1 / TsaD family. It depends on Fe(2+) as a cofactor.

The protein localises to the cytoplasm. The catalysed reaction is L-threonylcarbamoyladenylate + adenosine(37) in tRNA = N(6)-L-threonylcarbamoyladenosine(37) in tRNA + AMP + H(+). Functionally, required for the formation of a threonylcarbamoyl group on adenosine at position 37 (t(6)A37) in tRNAs that read codons beginning with adenine. Is involved in the transfer of the threonylcarbamoyl moiety of threonylcarbamoyl-AMP (TC-AMP) to the N6 group of A37, together with TsaE and TsaB. TsaD likely plays a direct catalytic role in this reaction. The polypeptide is tRNA N6-adenosine threonylcarbamoyltransferase (Mycobacterium sp. (strain KMS)).